We begin with the raw amino-acid sequence, 429 residues long: Histidine--tRNA ligase (429 aa).

Belongs to the class-II aminoacyl-tRNA synthetase family. In terms of assembly, homodimer.

It is found in the cytoplasm. The enzyme catalyses tRNA(His) + L-histidine + ATP = L-histidyl-tRNA(His) + AMP + diphosphate + H(+). The polypeptide is Histidine--tRNA ligase (Pseudomonas putida (strain GB-1)).